The following is a 430-amino-acid chain: Aspartate aminotransferase, mitochondrial (430 aa).

The transit peptide at 1-29 directs the protein to the mitochondrion; it reads MALLHSGRVLPGIAAAFHPGLAAAASARA. Phosphothreonine is present on Thr-48. Position 59 is an N6-acetyllysine (Lys-59). Gly-65 contributes to the substrate binding site. The residue at position 73 (Lys-73) is an N6-acetyllysine; alternate. Lys-73 is modified (N6-succinyllysine; alternate). N6-acetyllysine is present on Lys-82. N6-acetyllysine; alternate is present on Lys-90. Position 90 is an N6-succinyllysine; alternate (Lys-90). Position 96 is a 3'-nitrotyrosine; alternate (Tyr-96). At Tyr-96 the chain carries Phosphotyrosine; alternate. Lys-107 and Lys-122 each carry N6-acetyllysine; alternate. N6-succinyllysine; alternate occurs at positions 107 and 122. Position 143 is a phosphoserine (Ser-143). Lys-159 bears the N6-acetyllysine; alternate mark. The residue at position 159 (Lys-159) is an N6-succinyllysine; alternate. Position 162 (Trp-162) interacts with substrate. Lys-185 carries the N6-acetyllysine; alternate modification. Lys-185 is subject to N6-succinyllysine; alternate. Asn-215 contacts substrate. Position 227 is an N6-succinyllysine (Lys-227). An N6-acetyllysine modification is found at Lys-234. Residues Lys-279 and Lys-296 each carry the N6-acetyllysine; alternate modification. N6-(pyridoxal phosphate)lysine; alternate is present on Lys-279. The residue at position 296 (Lys-296) is an N6-succinyllysine; alternate. Lys-302 bears the N6-acetyllysine mark. Residue Lys-309 is modified to N6-acetyllysine; alternate. N6-succinyllysine; alternate is present on Lys-309. At Arg-313 the chain carries Asymmetric dimethylarginine. Position 333 is a phosphothreonine (Thr-333). N6-acetyllysine; alternate is present on Lys-338. Lys-338 is subject to N6-succinyllysine; alternate. An N6-acetyllysine modification is found at Lys-345. Lys-363 carries the post-translational modification N6-acetyllysine; alternate. Residue Lys-363 is modified to N6-succinyllysine; alternate. N6-acetyllysine is present on residues Lys-364 and Lys-387. 2 positions are modified to N6-acetyllysine; alternate: Lys-396 and Lys-404. N6-succinyllysine; alternate occurs at positions 396 and 404. Arg-407 serves as a coordination point for substrate.

This sequence belongs to the class-I pyridoxal-phosphate-dependent aminotransferase family. As to quaternary structure, homodimer. Requires pyridoxal 5'-phosphate as cofactor.

The protein resides in the mitochondrion matrix. The protein localises to the cell membrane. The catalysed reaction is L-aspartate + 2-oxoglutarate = oxaloacetate + L-glutamate. It carries out the reaction L-kynurenine + 2-oxoglutarate = kynurenate + L-glutamate + H2O. Functionally, catalyzes the irreversible transamination of the L-tryptophan metabolite L-kynurenine to form kynurenic acid (KA). As a member of the malate-aspartate shuttle, it has a key role in the intracellular NAD(H) redox balance. Is important for metabolite exchange between mitochondria and cytosol, and for amino acid metabolism. Facilitates cellular uptake of long-chain free fatty acids. In Homo sapiens (Human), this protein is Aspartate aminotransferase, mitochondrial.